A 350-amino-acid polypeptide reads, in one-letter code: Delta(6)-protoilludene synthase STEHIDRAFT_64702 (350 aa).

The Mg(2+) site is built by Asp89, Asn225, Ser229, and Glu233. A D(D/E)XX(D/E) motif motif is present at residues 89 to 93 (DEHSD). The short motif at 225-233 (NDIVSYNIE) is the NSE motif element. Residues Arg314 and Tyr315 each coordinate (2E,6E)-farnesyl diphosphate.

Belongs to the terpene synthase family. Requires Mg(2+) as cofactor. The cofactor is Mn(2+). It depends on Ca(2+) as a cofactor. Ni(2+) is required as a cofactor. Co(2+) serves as cofactor.

It catalyses the reaction (2E,6E)-farnesyl diphosphate = Delta(6)-protoilludene + diphosphate. The enzyme catalyses (2E,6E)-farnesyl diphosphate = alpha-selinene + diphosphate. Ca(2+) switches the cyclization mechanism of delta(6)-protoilludene synthase from 1,11 to 1,10 cyclization which leads to the production of beta-elemene. Its function is as follows. Terpene cyclase that catalyzes the cyclization of farnesyl diphosphate (FPP) to delta(6)-protoilludene. In presence of Ca(2+), a significant switch from 1,11 to a dual 1,11/1,10 cyclization occurs, producing beta-elemene as the major product, with lower levels of delta(6)-protoilludene and (E)-beta-caryophyllene, and traces of beta-selinene and alpha-selinene. The sequence is that of Delta(6)-protoilludene synthase STEHIDRAFT_64702 from Stereum hirsutum (strain FP-91666) (White-rot fungus).